The following is an 80-amino-acid chain: Phycocyanin-645 alpha-1 chain (80 aa).

Position 16 (arginine 16) interacts with (2R,3E)-phycocyanobilin. The mesobiliverdin site is built by cysteine 18, glutamine 24, tyrosine 25, and lysine 40. Residues proline 71 and isoleucine 73 each coordinate 15,16-dihydrobiliverdin.

This sequence belongs to the phycoerythrin family. As to quaternary structure, heterotetramer of 2 different alpha chains and 2 identical beta chains which form 2 alpha-beta heterodimers within the heterotetramer. In terms of processing, contains one phycocyanobilin chromophore, one mesobiliverdin chromophore and one 15,16-dihydrobiliverdin chromophore with binding mediated by both the alpha and beta subunits.

It localises to the plastid. Its subcellular location is the chloroplast thylakoid membrane. Its function is as follows. Light-harvesting photosynthetic tetrapyrrole chromophore-protein from the phycobiliprotein complex. In Chroomonas sp, this protein is Phycocyanin-645 alpha-1 chain.